Consider the following 264-residue polypeptide: 3-methyl-2-oxobutanoate hydroxymethyltransferase (264 aa).

The Mg(2+) site is built by Asp45 and Asp84. Residues Asp45–Ser46, Asp84, and Lys112 each bind 3-methyl-2-oxobutanoate. Residue Glu114 coordinates Mg(2+). Residue Glu181 is the Proton acceptor of the active site.

Belongs to the PanB family. As to quaternary structure, homodecamer; pentamer of dimers. Mg(2+) is required as a cofactor.

It is found in the cytoplasm. It catalyses the reaction 3-methyl-2-oxobutanoate + (6R)-5,10-methylene-5,6,7,8-tetrahydrofolate + H2O = 2-dehydropantoate + (6S)-5,6,7,8-tetrahydrofolate. The protein operates within cofactor biosynthesis; (R)-pantothenate biosynthesis; (R)-pantoate from 3-methyl-2-oxobutanoate: step 1/2. In terms of biological role, catalyzes the reversible reaction in which hydroxymethyl group from 5,10-methylenetetrahydrofolate is transferred onto alpha-ketoisovalerate to form ketopantoate. The chain is 3-methyl-2-oxobutanoate hydroxymethyltransferase from Shewanella denitrificans (strain OS217 / ATCC BAA-1090 / DSM 15013).